We begin with the raw amino-acid sequence, 145 residues long: Protein AggB (145 aa).

Positions 1 to 24 are cleaved as a signal peptide; that stretch reads MLKKSILPMSCGVLVMVMSGLLDA.

To E.coli AfaD.

The chain is Protein AggB (aggB) from Escherichia coli.